Here is a 195-residue protein sequence, read N- to C-terminus: HTH-type transcriptional regulator BetI (195 aa).

Residues 8–68 enclose the HTH tetR-type domain; it reads PIRRQQLIEA…ATMRYLISHL (61 aa). A DNA-binding region (H-T-H motif) is located at residues 31–50; it reads SIVQIARRAGVSNGIISHYF.

Its pathway is amine and polyamine biosynthesis; betaine biosynthesis via choline pathway [regulation]. Repressor involved in the biosynthesis of the osmoprotectant glycine betaine. It represses transcription of the choline transporter BetT and the genes of BetAB involved in the synthesis of glycine betaine. This is HTH-type transcriptional regulator BetI from Pectobacterium atrosepticum (strain SCRI 1043 / ATCC BAA-672) (Erwinia carotovora subsp. atroseptica).